A 180-amino-acid chain; its full sequence is Crossover junction endodeoxyribonuclease RuvC (180 aa).

Active-site residues include aspartate 7, glutamate 66, and aspartate 138. Aspartate 7, glutamate 66, and aspartate 138 together coordinate Mg(2+).

The protein belongs to the RuvC family. In terms of assembly, homodimer which binds Holliday junction (HJ) DNA. The HJ becomes 2-fold symmetrical on binding to RuvC with unstacked arms; it has a different conformation from HJ DNA in complex with RuvA. In the full resolvosome a probable DNA-RuvA(4)-RuvB(12)-RuvC(2) complex forms which resolves the HJ. Requires Mg(2+) as cofactor.

Its subcellular location is the cytoplasm. The enzyme catalyses Endonucleolytic cleavage at a junction such as a reciprocal single-stranded crossover between two homologous DNA duplexes (Holliday junction).. Functionally, the RuvA-RuvB-RuvC complex processes Holliday junction (HJ) DNA during genetic recombination and DNA repair. Endonuclease that resolves HJ intermediates. Cleaves cruciform DNA by making single-stranded nicks across the HJ at symmetrical positions within the homologous arms, yielding a 5'-phosphate and a 3'-hydroxyl group; requires a central core of homology in the junction. The consensus cleavage sequence is 5'-(A/T)TT(C/G)-3'. Cleavage occurs on the 3'-side of the TT dinucleotide at the point of strand exchange. HJ branch migration catalyzed by RuvA-RuvB allows RuvC to scan DNA until it finds its consensus sequence, where it cleaves and resolves the cruciform DNA. The chain is Crossover junction endodeoxyribonuclease RuvC from Herminiimonas arsenicoxydans.